Reading from the N-terminus, the 189-residue chain is Probable nicotinate-nucleotide adenylyltransferase (189 aa).

It belongs to the NadD family.

The enzyme catalyses nicotinate beta-D-ribonucleotide + ATP + H(+) = deamido-NAD(+) + diphosphate. It participates in cofactor biosynthesis; NAD(+) biosynthesis; deamido-NAD(+) from nicotinate D-ribonucleotide: step 1/1. In terms of biological role, catalyzes the reversible adenylation of nicotinate mononucleotide (NaMN) to nicotinic acid adenine dinucleotide (NaAD). This is Probable nicotinate-nucleotide adenylyltransferase from Bacillus cytotoxicus (strain DSM 22905 / CIP 110041 / 391-98 / NVH 391-98).